An 86-amino-acid chain; its full sequence is WNACTKQSDCEEDECCLDNLFFKRPYCEKRYGAEQRCSAAAVYKEDKDLYYFTCPCVPMYECLGKGSLDENGNTVMKNPKCIMPTL.

Expressed by the venom gland.

The protein localises to the secreted. This Cupiennius salei (American wandering spider) protein is Toxin CSTX-20.